Here is a 286-residue protein sequence, read N- to C-terminus: 4-hydroxybenzoate octaprenyltransferase (286 aa).

7 consecutive transmembrane segments (helical) span residues 22 to 42, 45 to 65, 98 to 118, 143 to 163, 213 to 233, 238 to 255, and 266 to 286; these read IGTL…EKAM, LSVL…GCVI, LFIV…LYTI, FFLG…TIEA, IIAL…YLSQ, YFIV…QCRL, and NAFL…LFGI.

Belongs to the UbiA prenyltransferase family. Mg(2+) is required as a cofactor.

The protein resides in the cell inner membrane. It carries out the reaction all-trans-octaprenyl diphosphate + 4-hydroxybenzoate = 4-hydroxy-3-(all-trans-octaprenyl)benzoate + diphosphate. The protein operates within cofactor biosynthesis; ubiquinone biosynthesis. Catalyzes the prenylation of para-hydroxybenzoate (PHB) with an all-trans polyprenyl group. Mediates the second step in the final reaction sequence of ubiquinone-8 (UQ-8) biosynthesis, which is the condensation of the polyisoprenoid side chain with PHB, generating the first membrane-bound Q intermediate 3-octaprenyl-4-hydroxybenzoate. The chain is 4-hydroxybenzoate octaprenyltransferase from Histophilus somni (strain 2336) (Haemophilus somnus).